Reading from the N-terminus, the 418-residue chain is MSDLLPLAAYNLNIEPYTPTPAIDVTTPVTVRITMAAIDPEALDDEKNPSTLRIIKRNPDYDDEDDAGGLLGDYDEDELDISEEEEEEEEKSKSKKGKGKGKSKKQEEEEEEEEEDEDEGDEELIEIDTDDEFQEFVLATLSPKTQYQQSLDIVIAPEEEVQFIVTGSYRVSLTGNYVKHPFDAPGYDDEDDDEEDDESYDEDEDDYLTPDEEADLEELEDASDVEAKIQELVEKEQSKSKKNNKRKQPEPEEEEEEEEEEEEEQKLVEETKKNKKAKKEKKVEFKKDLEEGPTKKEEKKEEKKEKPKTKVLEGGIIIEDRVTGKGKACKKGSKVGMRYIGKLKNGKVFDKNTSGKPFVFNLGRGEVIKGWDIGVAGMAVGGERRIVIPAPYAYGKQALPGIPANSELTFDVKLVSLK.

Disordered regions lie at residues Pro49–Phe133, Ser172–Lys273, and Leu289–Thr309. A compositionally biased stretch (acidic residues) spans Tyr61 to Glu89. Residues Lys93–Ser103 show a composition bias toward basic residues. Acidic residues-rich tracts occupy residues Glu108–Phe133 and Gly186–Asp224. Positions Val225 to Lys239 are enriched in basic and acidic residues. Residues Pro251–Glu264 are compositionally biased toward acidic residues. The PPIase FKBP-type domain occupies Gly332–Lys418.

The protein belongs to the FKBP-type PPIase family. FKBP3/4 subfamily.

Its subcellular location is the nucleus. The protein localises to the nucleolus. It carries out the reaction [protein]-peptidylproline (omega=180) = [protein]-peptidylproline (omega=0). Inhibited by both FK506 and rapamycin. Functionally, PPIases accelerate the folding of proteins. It catalyzes the cis-trans isomerization of proline imidic peptide bonds in oligopeptides. This Kluyveromyces lactis (strain ATCC 8585 / CBS 2359 / DSM 70799 / NBRC 1267 / NRRL Y-1140 / WM37) (Yeast) protein is FK506-binding protein 3 (FPR3).